Consider the following 122-residue polypeptide: Large ribosomal subunit protein uL14 (122 aa).

It belongs to the universal ribosomal protein uL14 family. As to quaternary structure, part of the 50S ribosomal subunit. Forms a cluster with proteins L3 and L19. In the 70S ribosome, L14 and L19 interact and together make contacts with the 16S rRNA in bridges B5 and B8.

In terms of biological role, binds to 23S rRNA. Forms part of two intersubunit bridges in the 70S ribosome. In Borreliella burgdorferi (strain ZS7) (Borrelia burgdorferi), this protein is Large ribosomal subunit protein uL14.